The chain runs to 444 residues: Nuclear distribution protein nudF (444 aa).

The region spanning 9–41 (QAEALHKAMLAYLSVINAPQTAETLREELHFDE) is the LisH domain. Residues 60–88 (TGIARLQRRINDLEAEVRSLQAELEASPS) adopt a coiled-coil conformation. Positions 83 to 107 (LEASPSAARAKNQDPTNWLPKPSST) are disordered. 7 WD repeats span residues 112–153 (SHRD…RTLK), 155–195 (HIRG…ANIR), 199–239 (GHDH…CVKV), 243–282 (ATES…PKAA), 285–345 (GHEN…IKTL), 347–386 (GHDN…RLVK), and 391–437 (AHEH…GCAD).

The protein belongs to the WD repeat LIS1/nudF family. As to quaternary structure, interacts with dynein. Self-associates. Interacts with bnfA, nudC and nudE.

The protein resides in the cytoplasm. The protein localises to the cytoskeleton. It is found in the spindle pole. Functionally, positively regulates the activity of the minus-end directed microtubule motor protein dynein. May enhance dynein-mediated microtubule sliding by targeting dynein to the microtubule plus end. Required for nuclear migration during vegetative growth as well as development. Required for retrograde early endosome (EE) transport from the hyphal tip. Required for localization of dynein to the mitotic spindle poles. Recruits additional proteins to the dynein complex at SPBs. The protein is Nuclear distribution protein nudF of Emericella nidulans (strain FGSC A4 / ATCC 38163 / CBS 112.46 / NRRL 194 / M139) (Aspergillus nidulans).